Consider the following 940-residue polypeptide: UvrABC system protein A (940 aa).

An ATP-binding site is contributed by 31-38 (GLSGSGKS). The segment at 253 to 280 (CPICGYSMRELEPRLFSFNNPAGACPTC) adopts a C4-type zinc-finger fold. ABC transporter domains are found at residues 310 to 587 (WDRR…PESL) and 607 to 937 (ANPE…RFLK). Residue 640-647 (GVSGSGKS) coordinates ATP. A C4-type zinc finger spans residues 740–766 (CEACQGDGVIKVEMHFLPDIYVPCDQC).

This sequence belongs to the ABC transporter superfamily. UvrA family. As to quaternary structure, forms a heterotetramer with UvrB during the search for lesions.

Its subcellular location is the cytoplasm. Functionally, the UvrABC repair system catalyzes the recognition and processing of DNA lesions. UvrA is an ATPase and a DNA-binding protein. A damage recognition complex composed of 2 UvrA and 2 UvrB subunits scans DNA for abnormalities. When the presence of a lesion has been verified by UvrB, the UvrA molecules dissociate. In terms of biological role, plays a role in recovery after DNA ADP-ribosylation. The protein is UvrABC system protein A of Escherichia coli O127:H6 (strain E2348/69 / EPEC).